Here is a 215-residue protein sequence, read N- to C-terminus: Transcription elongation factor A protein-like 4 (215 aa).

An N-acetylmethionine modification is found at methionine 1. The disordered stretch occupies residues 1–133 (MEKLYSENEG…RKAKRKTNKG (133 aa)). Serine 6, serine 88, and serine 102 each carry phosphoserine. Basic and acidic residues predominate over residues 25–102 (QDERKPEVTC…KPEIEGKPES (78 aa)).

The protein belongs to the TFS-II family. TFA subfamily.

It localises to the nucleus. Functionally, may be involved in transcriptional regulation. The protein is Transcription elongation factor A protein-like 4 (TCEAL4) of Homo sapiens (Human).